We begin with the raw amino-acid sequence, 426 residues long: Cytochrome c biogenesis protein CcsB (426 aa).

3 helical membrane passes run 14-34 (LKIAILLLLLIAISCAAGTLI), 72-92 (SFWFLFLLIWLGLALSVCSFR), and 162-182 (LGPILIHLGMILLMIGATYGS).

This sequence belongs to the Ccs1/CcsB family. May interact with CcsA.

It localises to the cellular thylakoid membrane. Functionally, required during biogenesis of c-type cytochromes (cytochrome c6 and cytochrome f) at the step of heme attachment. In Prochlorococcus marinus (strain NATL1A), this protein is Cytochrome c biogenesis protein CcsB.